The primary structure comprises 335 residues: Ferrochelatase (335 aa).

Residues His211 and Glu290 each coordinate Fe cation.

This sequence belongs to the ferrochelatase family.

The protein resides in the cytoplasm. It catalyses the reaction heme b + 2 H(+) = protoporphyrin IX + Fe(2+). The protein operates within porphyrin-containing compound metabolism; protoheme biosynthesis; protoheme from protoporphyrin-IX: step 1/1. Its function is as follows. Catalyzes the ferrous insertion into protoporphyrin IX. This chain is Ferrochelatase, found in Sulfurihydrogenibium sp. (strain YO3AOP1).